The following is an 800-amino-acid chain: Protein MEI2-like 5 (800 aa).

RRM domains lie at 168–241 (RTLF…FSIP) and 253–326 (GTLV…PSRP). A phosphoserine mark is found at Ser-384 and Ser-390. Disordered regions lie at residues 470–489 (GSPN…TSST) and 776–800 (VVDE…RERS). Over residues 471 to 488 (SPNARSEPSSSSVWSTSS) the composition is skewed to low complexity. Phosphoserine is present on residues Ser-789 and Ser-792.

Its function is as follows. Probable RNA-binding protein that plays a role in meiosis and vegetative growth. The protein is Protein MEI2-like 5 (ML5) of Arabidopsis thaliana (Mouse-ear cress).